The sequence spans 804 residues: Protein translocase subunit SecA (804 aa).

ATP is bound by residues Gln87, 105-109, and Asp500; that span reads GEGKT.

Belongs to the SecA family. Monomer and homodimer. Part of the essential Sec protein translocation apparatus which comprises SecA, SecYEG and auxiliary proteins SecDF-YajC and YidC.

Its subcellular location is the cell inner membrane. It is found in the cytoplasm. It carries out the reaction ATP + H2O + cellular proteinSide 1 = ADP + phosphate + cellular proteinSide 2.. Part of the Sec protein translocase complex. Interacts with the SecYEG preprotein conducting channel. Has a central role in coupling the hydrolysis of ATP to the transfer of proteins into and across the cell membrane, serving both as a receptor for the preprotein-SecB complex and as an ATP-driven molecular motor driving the stepwise translocation of polypeptide chains across the membrane. This chain is Protein translocase subunit SecA, found in Neorickettsia sennetsu (strain ATCC VR-367 / Miyayama) (Ehrlichia sennetsu).